Consider the following 186-residue polypeptide: Peptidyl-tRNA hydrolase (186 aa).

Tyrosine 14 serves as a coordination point for tRNA. The Proton acceptor role is filled by histidine 19. TRNA-binding residues include tyrosine 60 and asparagine 62.

This sequence belongs to the PTH family. In terms of assembly, monomer.

It is found in the cytoplasm. It carries out the reaction an N-acyl-L-alpha-aminoacyl-tRNA + H2O = an N-acyl-L-amino acid + a tRNA + H(+). In terms of biological role, hydrolyzes ribosome-free peptidyl-tRNAs (with 1 or more amino acids incorporated), which drop off the ribosome during protein synthesis, or as a result of ribosome stalling. Catalyzes the release of premature peptidyl moieties from peptidyl-tRNA molecules trapped in stalled 50S ribosomal subunits, and thus maintains levels of free tRNAs and 50S ribosomes. The chain is Peptidyl-tRNA hydrolase from Mycoplasmopsis pulmonis (strain UAB CTIP) (Mycoplasma pulmonis).